The following is a 362-amino-acid chain: Chorismate synthase (362 aa).

2 residues coordinate NADP(+): R48 and R54. FMN contacts are provided by residues 125–127 (RSS), 241–242 (NA), G286, 301–305 (KPTSS), and R327.

The protein belongs to the chorismate synthase family. Homotetramer. Requires FMNH2 as cofactor.

The enzyme catalyses 5-O-(1-carboxyvinyl)-3-phosphoshikimate = chorismate + phosphate. It participates in metabolic intermediate biosynthesis; chorismate biosynthesis; chorismate from D-erythrose 4-phosphate and phosphoenolpyruvate: step 7/7. Its function is as follows. Catalyzes the anti-1,4-elimination of the C-3 phosphate and the C-6 proR hydrogen from 5-enolpyruvylshikimate-3-phosphate (EPSP) to yield chorismate, which is the branch point compound that serves as the starting substrate for the three terminal pathways of aromatic amino acid biosynthesis. This reaction introduces a second double bond into the aromatic ring system. The chain is Chorismate synthase from Paramagnetospirillum magneticum (strain ATCC 700264 / AMB-1) (Magnetospirillum magneticum).